Here is a 445-residue protein sequence, read N- to C-terminus: Transcription activator AFTR-1 (445 aa).

A DNA-binding region (zn(2)-C6 fungal-type) is located at residues 17–44; the sequence is CDFCTQSKLRCNKNKPSCRRCTLQQQPC. The disordered stretch occupies residues 50–89; that stretch reads RRTGRPPKHPRKANDCQEANGQHGDQDPVTSTPGGSYQQQ. Residues 51-60 are compositionally biased toward basic residues; sequence RTGRPPKHPR. Residues 77 to 89 show a composition bias toward polar residues; that stretch reads PVTSTPGGSYQQQ.

The protein resides in the nucleus. Functionally, transcription factor that regulates the expression of the gene clusters that mediate the biosynthesis of the host-selective toxins (HSTs) AF-toxins responsible for Alternaria black spot of strawberry disease by the strawberry pathotype. On cellular level, AF-toxins affect plasma membrane of susceptible cells and cause a sudden increase in loss of K(+) after a few minutes of toxin treatment. The chain is Transcription activator AFTR-1 from Alternaria alternata (Alternaria rot fungus).